The sequence spans 86 residues: Neurotoxin-like protein pMD18-NTL1/2/4/5 (86 aa).

The first 21 residues, 1–21 (MKTLLLTLVVLTIACLDLGYT), serve as a signal peptide directing secretion. 4 cysteine pairs are disulfide-bonded: cysteine 24–cysteine 45, cysteine 38–cysteine 62, cysteine 66–cysteine 78, and cysteine 79–cysteine 84.

This sequence belongs to the three-finger toxin family. Short-chain subfamily. Orphan group IX sub-subfamily. As to expression, expressed by the venom gland.

The protein resides in the secreted. The sequence is that of Neurotoxin-like protein pMD18-NTL1/2/4/5 from Bungarus multicinctus (Many-banded krait).